Consider the following 511-residue polypeptide: Trigger factor (511 aa).

Residues Gly-168 to Val-253 form the PPIase FKBP-type domain. A disordered region spans residues Asp-446 to Asp-511. The segment covering His-455–Pro-478 has biased composition (basic and acidic residues). Residues Lys-479–Ala-488 show a composition bias toward basic residues. Positions Ala-489–Pro-498 are enriched in basic and acidic residues. Residues Ala-499–Asp-511 show a composition bias toward basic residues.

The protein belongs to the FKBP-type PPIase family. Tig subfamily.

The protein resides in the cytoplasm. The enzyme catalyses [protein]-peptidylproline (omega=180) = [protein]-peptidylproline (omega=0). Functionally, involved in protein export. Acts as a chaperone by maintaining the newly synthesized protein in an open conformation. Functions as a peptidyl-prolyl cis-trans isomerase. This chain is Trigger factor, found in Parvibaculum lavamentivorans (strain DS-1 / DSM 13023 / NCIMB 13966).